Consider the following 137-residue polypeptide: Early nodulin-55-1 (137 aa).

In terms of domain architecture, Phytocyanin spans 1–67; sequence KYDERTESVH…GLKLMVVVMS (67 aa). N-linked (GlcNAc...) asparagine glycosylation is found at Asn-13, Asn-51, and Asn-68. An intrachain disulfide couples Cys-20 to Cys-55. Residues 70-115 form a disordered region; the sequence is TKKKLIHSPSPSSPSPSPSPSPSPSPSPSPSLSSPSPSPLPNNQGV. Residues 80–98 show a composition bias toward pro residues; it reads PSSPSPSPSPSPSPSPSPS.

This sequence belongs to the early nodulin-like (ENODL) family.

It is found in the symbiosome. It localises to the peribacteroid membrane. Functionally, may act as a carbohydrate transporter. This Glycine max (Soybean) protein is Early nodulin-55-1.